The chain runs to 448 residues: Methionine aminopeptidase 2 (448 aa).

Positions 1–17 are enriched in low complexity; sequence MPATAEAADAATQATDA. Positions 1–87 are disordered; that stretch reads MPATAEAADA…QTEPPSIGLT (87 aa). Residues 21 to 34 show a composition bias toward basic and acidic residues; sequence KLEENKLPEGQERG. The span at 35–46 shows a compositional bias: acidic residues; sequence PEEEEDDDDDET. Basic residues predominate over residues 55 to 71; the sequence is KKKKKKKSGAKKKKSKT. His200 is a substrate binding site. A divalent metal cation-binding residues include Asp220, Asp231, and His300. His308 serves as a coordination point for substrate. Positions 334 and 429 each coordinate a divalent metal cation.

The protein belongs to the peptidase M24A family. Methionine aminopeptidase eukaryotic type 2 subfamily. Co(2+) serves as cofactor. Requires Zn(2+) as cofactor. The cofactor is Mn(2+). Fe(2+) is required as a cofactor.

It localises to the cytoplasm. The enzyme catalyses Release of N-terminal amino acids, preferentially methionine, from peptides and arylamides.. In terms of biological role, cotranslationally removes the N-terminal methionine from nascent proteins. The N-terminal methionine is often cleaved when the second residue in the primary sequence is small and uncharged (Met-Ala-, Cys, Gly, Pro, Ser, Thr, or Val). The chain is Methionine aminopeptidase 2 from Malassezia globosa (strain ATCC MYA-4612 / CBS 7966) (Dandruff-associated fungus).